We begin with the raw amino-acid sequence, 145 residues long: D-aminoacyl-tRNA deacylase (145 aa).

The Gly-cisPro motif, important for rejection of L-amino acids motif lies at 137 to 138; sequence GP.

This sequence belongs to the DTD family. As to quaternary structure, homodimer.

Its subcellular location is the cytoplasm. It carries out the reaction glycyl-tRNA(Ala) + H2O = tRNA(Ala) + glycine + H(+). The catalysed reaction is a D-aminoacyl-tRNA + H2O = a tRNA + a D-alpha-amino acid + H(+). Functionally, an aminoacyl-tRNA editing enzyme that deacylates mischarged D-aminoacyl-tRNAs. Also deacylates mischarged glycyl-tRNA(Ala), protecting cells against glycine mischarging by AlaRS. Acts via tRNA-based rather than protein-based catalysis; rejects L-amino acids rather than detecting D-amino acids in the active site. By recycling D-aminoacyl-tRNA to D-amino acids and free tRNA molecules, this enzyme counteracts the toxicity associated with the formation of D-aminoacyl-tRNA entities in vivo and helps enforce protein L-homochirality. The protein is D-aminoacyl-tRNA deacylase of Salmonella paratyphi C (strain RKS4594).